Here is a 266-residue protein sequence, read N- to C-terminus: Potassium/proton antiporter CemA (266 aa).

A run of 3 helical transmembrane segments spans residues 46 to 66 (VIVS…INIL), 151 to 171 (FLSF…IIIL), and 226 to 246 (FMSL…KYWI).

This sequence belongs to the CemA family.

The protein localises to the plastid. It localises to the chloroplast inner membrane. The catalysed reaction is K(+)(in) + H(+)(out) = K(+)(out) + H(+)(in). Its function is as follows. Contributes to K(+)/H(+) antiport activity by supporting proton efflux to control proton extrusion and homeostasis in chloroplasts in a light-dependent manner to modulate photosynthesis. Prevents excessive induction of non-photochemical quenching (NPQ) under continuous-light conditions. Indirectly promotes efficient inorganic carbon uptake into chloroplasts. This is Potassium/proton antiporter CemA from Chlorella vulgaris (Green alga).